Consider the following 1048-residue polypeptide: Calcium-transporting ATPase, endoplasmic reticulum-type (1048 aa).

Residues 1–63 (MEEKPFPAWS…WRLVLEQFDD (63 aa)) are Cytoplasmic-facing. Residues 64 to 84 (TLVKILLGAAFISFVLAYVNQ) traverse the membrane as a helical segment. Over 85 to 93 (DETGESGFE) the chain is Lumenal. A helical transmembrane segment spans residues 94 to 114 (AYVEPLVILWILVLNAIVGVW). At 115-213 (QESNAEKALE…DCELQAKENM (99 aa)) the chain is on the cytoplasmic side. The helical transmembrane segment at 214–234 (VFAGTTVVNGSCICIVVNTGM) threads the bilayer. The Lumenal segment spans residues 235–267 (CTEIGKIQRQIHDASMEESDTPLKKKLDEFGNR). A helical transmembrane segment spans residues 268–288 (LTFAIGVVCLVVWAINYKYFL). At 289–312 (SWEVVDDWPSDFRFSFEKCAYYFK) the chain is on the cytoplasmic side. A helical membrane pass occupies residues 313–333 (IAVALAVAAIPEGLPSVITTC). The Ca(2+) site is built by Val-319, Ala-320, Ile-322, and Glu-324. Topologically, residues 334-800 (LALGTRKMAQ…ISSNVGEVIS (467 aa)) are lumenal. Asp-366 serves as the catalytic 4-aspartylphosphate intermediate. Mg(2+) contacts are provided by Asp-728 and Asp-732. Ca(2+) is bound by residues Asn-794 and Glu-797. Residues 801-821 (IFLTAVLGIPECLIPVQLLWV) traverse the membrane as a helical segment. Asn-822, Thr-825, and Asp-826 together coordinate Ca(2+). Over 822–862 (NLVTDGPPATALGFNPADVDIMQKPPRKNTDALINSWVFFR) the chain is Cytoplasmic. The helical transmembrane segment at 863-883 (YMVIGSYVGIATVGIFIVWYT) threads the bilayer. Residues 884 to 944 (QASFLGINIV…CEYFTVGKVK (61 aa)) lie on the Lumenal side of the membrane. Residues 945 to 965 (AMTLSLSVLVAIEMFNSLNAL) form a helical membrane-spanning segment. Residue Glu-957 coordinates Ca(2+). The Cytoplasmic segment spans residues 966-981 (SEDNSLIKMPPWRNPW). The chain crosses the membrane as a helical span at residues 982-1002 (LLVAMSLSFALHSVILYVPFL). The Lumenal portion of the chain corresponds to 1003–1007 (ADIFG). A helical transmembrane segment spans residues 1008–1028 (IVPLSLYEWLLVILLSAPVIL). Topologically, residues 1029–1048 (IDEVLKFVGRRRRRTKLKAA) are cytoplasmic.

This sequence belongs to the cation transport ATPase (P-type) (TC 3.A.3) family. Type IIA subfamily. As to expression, 9-fold higher level in roots compared with leaves.

Its subcellular location is the endoplasmic reticulum membrane. It carries out the reaction Ca(2+)(in) + ATP + H2O = Ca(2+)(out) + ADP + phosphate + H(+). Functionally, this magnesium-dependent enzyme catalyzes the hydrolysis of ATP coupled with the translocation of calcium from the cytosol to an endomembrane compartment. The sequence is that of Calcium-transporting ATPase, endoplasmic reticulum-type from Solanum lycopersicum (Tomato).